The chain runs to 102 residues: Cytochrome c3 (102 aa).

The heme c site is built by H26, H29, C34, C37, H38, H39, C50, C55, H56, H73, C81, C84, H85, C95, C98, and H99.

Requires heme as cofactor.

Its subcellular location is the periplasm. In terms of biological role, participates in sulfate respiration coupled with phosphorylation by transferring electrons from the enzyme dehydrogenase to ferredoxin. The sequence is that of Cytochrome c3 from Desulfovibrio desulfuricans.